The following is a 159-amino-acid chain: 2-C-methyl-D-erythritol 2,4-cyclodiphosphate synthase (159 aa).

The a divalent metal cation site is built by D8 and H10. Residues 8–10 and 34–35 contribute to the 4-CDP-2-C-methyl-D-erythritol 2-phosphate site; these read DVH and HS. H42 contacts a divalent metal cation. Residues 56 to 58, 61 to 65, 100 to 106, 132 to 135, F139, and R142 contribute to the 4-CDP-2-C-methyl-D-erythritol 2-phosphate site; these read DIG, FPDTD, AQAPRML, and TTTE.

It belongs to the IspF family. Homotrimer. Requires a divalent metal cation as cofactor.

It catalyses the reaction 4-CDP-2-C-methyl-D-erythritol 2-phosphate = 2-C-methyl-D-erythritol 2,4-cyclic diphosphate + CMP. It functions in the pathway isoprenoid biosynthesis; isopentenyl diphosphate biosynthesis via DXP pathway; isopentenyl diphosphate from 1-deoxy-D-xylulose 5-phosphate: step 4/6. Its function is as follows. Involved in the biosynthesis of isopentenyl diphosphate (IPP) and dimethylallyl diphosphate (DMAPP), two major building blocks of isoprenoid compounds. Catalyzes the conversion of 4-diphosphocytidyl-2-C-methyl-D-erythritol 2-phosphate (CDP-ME2P) to 2-C-methyl-D-erythritol 2,4-cyclodiphosphate (ME-CPP) with a corresponding release of cytidine 5-monophosphate (CMP). The sequence is that of 2-C-methyl-D-erythritol 2,4-cyclodiphosphate synthase from Escherichia coli O45:K1 (strain S88 / ExPEC).